Here is a 283-residue protein sequence, read N- to C-terminus: Bifunctional protein FolD (283 aa).

NADP(+) is bound by residues 166 to 168 (GQS), serine 191, and isoleucine 232.

The protein belongs to the tetrahydrofolate dehydrogenase/cyclohydrolase family. As to quaternary structure, homodimer.

The catalysed reaction is (6R)-5,10-methylene-5,6,7,8-tetrahydrofolate + NADP(+) = (6R)-5,10-methenyltetrahydrofolate + NADPH. It catalyses the reaction (6R)-5,10-methenyltetrahydrofolate + H2O = (6R)-10-formyltetrahydrofolate + H(+). The protein operates within one-carbon metabolism; tetrahydrofolate interconversion. Functionally, catalyzes the oxidation of 5,10-methylenetetrahydrofolate to 5,10-methenyltetrahydrofolate and then the hydrolysis of 5,10-methenyltetrahydrofolate to 10-formyltetrahydrofolate. The protein is Bifunctional protein FolD of Laribacter hongkongensis (strain HLHK9).